A 313-amino-acid chain; its full sequence is 3-ketodihydrosphingosine reductase TSC10 (313 aa).

NADP(+) is bound at residue leucine 12. 3 residues coordinate NADPH: glycine 15, serine 17, and glycine 19. Residues 15–19 carry the GXSXG motif; sequence GGSQG. Leucine 20 contributes to the NADP(+) binding site. NADPH contacts are provided by arginine 47, lysine 51, and aspartate 86. NADP(+) is bound at residue aspartate 86. Serine 160 serves as the catalytic Proton donor. NADP(+)-binding residues include tyrosine 174, lysine 178, and serine 207. Tyrosine 174 functions as the Proton acceptor in the catalytic mechanism. Catalysis depends on lysine 178, which acts as the Lowers pKa of active site Tyr. Residues 278–298 form a helical membrane-spanning segment; sequence VFSWILGALLNITIVPIYMLI.

The protein belongs to the short-chain dehydrogenases/reductases (SDR) family.

The protein localises to the endoplasmic reticulum membrane. It catalyses the reaction sphinganine + NADP(+) = 3-oxosphinganine + NADPH + H(+). It functions in the pathway lipid metabolism; sphingolipid metabolism. Its function is as follows. Catalyzes the reduction of 3'-oxosphinganine (3-ketodihydrosphingosine/KDS) to sphinganine (dihydrosphingosine/DHS), the second step of de novo sphingolipid biosynthesis. This is 3-ketodihydrosphingosine reductase TSC10 (TSC10) from Kluyveromyces lactis (strain ATCC 8585 / CBS 2359 / DSM 70799 / NBRC 1267 / NRRL Y-1140 / WM37) (Yeast).